The following is a 688-amino-acid chain: Glycine--tRNA ligase beta subunit (688 aa).

Belongs to the class-II aminoacyl-tRNA synthetase family. As to quaternary structure, tetramer of two alpha and two beta subunits.

The protein resides in the cytoplasm. The catalysed reaction is tRNA(Gly) + glycine + ATP = glycyl-tRNA(Gly) + AMP + diphosphate. This is Glycine--tRNA ligase beta subunit from Aliivibrio fischeri (strain ATCC 700601 / ES114) (Vibrio fischeri).